A 99-amino-acid polypeptide reads, in one-letter code: Large ribosomal subunit protein uL23 (99 aa).

It belongs to the universal ribosomal protein uL23 family. As to quaternary structure, part of the 50S ribosomal subunit. Contacts protein L29, and trigger factor when it is bound to the ribosome.

One of the early assembly proteins it binds 23S rRNA. One of the proteins that surrounds the polypeptide exit tunnel on the outside of the ribosome. Forms the main docking site for trigger factor binding to the ribosome. In Shewanella loihica (strain ATCC BAA-1088 / PV-4), this protein is Large ribosomal subunit protein uL23.